A 681-amino-acid polypeptide reads, in one-letter code: MLVSWKWLSRYVDMTLSHDELVDRLSLSGLNHEGSETVDGDVVIDLEVTSNRGDCLGHIGVAREIAALTDQKLKIPTIEYQESGSAVDDSLAVTNEMPEACPRYTARVIRGVKVGDSPEWLQESLKAVGIGVVNNVVDVTNYVMMECGQPLHAFDLAKVGEGKIVVRPGKEKEQLEAIDHRNYDLNDSTCVIADSSAALAVGGVMGGASSEVTEATADIVLEAAEFVPLSVRRTARRLKLHSPSSFRFERRVDPVGIDWASRRACQLITEIAGGSVAPGVIDTAPEIPARETVLLRPKRVAALLGLEIETAELDKILRSLGCEVSAFADGLQCVPPSWRHDLTREVDLIEEVARIHGYDQIPEDSPIPVAPSSKRRFDTAMERIRGVLTAAGISEAMTPSVVTEKLDQMISPWTELPALQTRTSMLEGARTLRRSLIPSLLQSRAANWASASLVADLFEIAHVYLPAPAGSDSALLPDETYHIGLIAGEDFFALKGTIETLCDRLGIPGELTVGPVQRDGFAKGGAVELTLVGDDAKEPLRLGFLGFVDGKLVKQWKLTGRVVAAELSADVLVNQSRLVPQQQAVSSFPSIQRDLNLVLPESVRWNELAGLVRKAAKERLADLTYRETYRNEKVDGPNKKRVLFSMELQSQTETLSGGDADSIINELVASCEKQLEAVLLR.

One can recognise a B5 domain in the interval 288-363 (PARETVLLRP…RIHGYDQIPE (76 aa)). 4 residues coordinate Mg(2+): Asp-341, Asp-347, Glu-350, and Glu-351. Residues 586–681 (SSFPSIQRDL…EKQLEAVLLR (96 aa)) form the FDX-ACB domain.

The protein belongs to the phenylalanyl-tRNA synthetase beta subunit family. Type 1 subfamily. Tetramer of two alpha and two beta subunits. The cofactor is Mg(2+).

The protein resides in the cytoplasm. It catalyses the reaction tRNA(Phe) + L-phenylalanine + ATP = L-phenylalanyl-tRNA(Phe) + AMP + diphosphate + H(+). This chain is Phenylalanine--tRNA ligase beta subunit, found in Rhodopirellula baltica (strain DSM 10527 / NCIMB 13988 / SH1).